A 457-amino-acid chain; its full sequence is Multidrug resistance protein MdtK (457 aa).

A run of 12 helical transmembrane segments spans residues 11 to 31, 53 to 73, 93 to 113, 127 to 147, 160 to 180, 188 to 208, 243 to 263, 276 to 296, 314 to 334, 357 to 377, 387 to 407, and 418 to 438; these read LLALAIPVILAQVAQTAMGFV, IWLPAILFGHGLLLALTPVIA, WLASFVSVLVMIVLWNAGYII, AVGYLRALLWGAPGYLFFQVA, GMVMGFLGLLVNIPVNYIFIY, LGGIGCGVATAAVYWVMFIAM, LPIALALFFEVTLFAVVALLV, IALNFSSLMFVLPMSLAAAVT, AARTGLSVGVCMAVVTAIFTV, LMLLAAVYQISDSIQVIGSGI, IFFITFTAYWVLGLPSGYILA, and PAGFWMGFIIGLTSAAVLMML.

This sequence belongs to the multi antimicrobial extrusion (MATE) (TC 2.A.66.1) family. MdtK subfamily.

It is found in the cell inner membrane. In terms of biological role, multidrug efflux pump that functions probably as a Na(+)/drug antiporter. The sequence is that of Multidrug resistance protein MdtK from Salmonella arizonae (strain ATCC BAA-731 / CDC346-86 / RSK2980).